Consider the following 322-residue polypeptide: Rhomboid-like protein 16, chloroplastic (322 aa).

A chloroplast-targeting transit peptide spans 1–52; it reads MHAIFCRRVAVGCSSPQLTKLVTKQASQSRHSLSHLLPFDLSSRFVPPYVVS. 6 helical membrane passes run 110-130, 166-186, 201-221, 238-258, 265-285, and 295-315; these read WING…AVFT, FSHV…YFGA, YFAG…LSVI, IGKL…MLLY, FGLM…LNII, and TLTS…WARI.

It belongs to the peptidase S54 family.

It is found in the plastid. The protein resides in the chloroplast membrane. Its function is as follows. Rhomboid-type serine protease that catalyzes intramembrane proteolysis. May cleave the plastid translocon component Tic40. The sequence is that of Rhomboid-like protein 16, chloroplastic from Arabidopsis thaliana (Mouse-ear cress).